We begin with the raw amino-acid sequence, 195 residues long: Imidazoleglycerol-phosphate dehydratase (195 aa).

It belongs to the imidazoleglycerol-phosphate dehydratase family.

It localises to the cytoplasm. The enzyme catalyses D-erythro-1-(imidazol-4-yl)glycerol 3-phosphate = 3-(imidazol-4-yl)-2-oxopropyl phosphate + H2O. The protein operates within amino-acid biosynthesis; L-histidine biosynthesis; L-histidine from 5-phospho-alpha-D-ribose 1-diphosphate: step 6/9. The sequence is that of Imidazoleglycerol-phosphate dehydratase from Haloarcula marismortui (strain ATCC 43049 / DSM 3752 / JCM 8966 / VKM B-1809) (Halobacterium marismortui).